The sequence spans 111 residues: BET1-like protein (111 aa).

Over 1–86 the chain is Cytoplasmic; the sequence is MADWARAQSP…MARSGRDNRK (86 aa). A phosphoserine mark is found at Ser9 and Ser37. Residues 15–77 form the t-SNARE coiled-coil homology domain; sequence EILDRENKRM…TGSVKRFSTM (63 aa). The helical; Anchor for type IV membrane protein transmembrane segment at 87–107 threads the bilayer; the sequence is LLCGVAVGLIVAFFILSYLLS. Residues 108-111 lie on the Lumenal side of the membrane; the sequence is RART.

Component of a SNARE complex consisting of STX5, YKT6, GOSR1 and BET1L. Interacts with STX5.

The protein localises to the golgi apparatus membrane. It localises to the golgi apparatus. It is found in the trans-Golgi network membrane. In terms of biological role, vesicle SNARE required for targeting and fusion of retrograde transport vesicles with the Golgi complex. Required for the integrity of the Golgi complex. This is BET1-like protein from Bos taurus (Bovine).